Reading from the N-terminus, the 414-residue chain is Serine/threonine transporter SstT (414 aa).

Transmembrane regions (helical) follow at residues 22-42 (GLVL…TIGF), 54-74 (IFVK…VMAA), 89-109 (IIVL…IAGF), 148-168 (AIFK…GLAL), 189-209 (IVHV…AETL), 223-243 (LLAV…PILV), 305-325 (MAGA…TLGL), and 337-357 (IVAA…LLLI).

The protein belongs to the dicarboxylate/amino acid:cation symporter (DAACS) (TC 2.A.23) family.

It localises to the cell inner membrane. It carries out the reaction L-serine(in) + Na(+)(in) = L-serine(out) + Na(+)(out). The catalysed reaction is L-threonine(in) + Na(+)(in) = L-threonine(out) + Na(+)(out). Its function is as follows. Involved in the import of serine and threonine into the cell, with the concomitant import of sodium (symport system). This Haemophilus influenzae (strain PittEE) protein is Serine/threonine transporter SstT.